We begin with the raw amino-acid sequence, 150 residues long: 3-hydroxyacyl-[acyl-carrier-protein] dehydratase FabZ (150 aa).

His52 is a catalytic residue.

The protein belongs to the thioester dehydratase family. FabZ subfamily.

The protein resides in the cytoplasm. The catalysed reaction is a (3R)-hydroxyacyl-[ACP] = a (2E)-enoyl-[ACP] + H2O. In terms of biological role, involved in unsaturated fatty acids biosynthesis. Catalyzes the dehydration of short chain beta-hydroxyacyl-ACPs and long chain saturated and unsaturated beta-hydroxyacyl-ACPs. The polypeptide is 3-hydroxyacyl-[acyl-carrier-protein] dehydratase FabZ (Variovorax paradoxus (strain S110)).